We begin with the raw amino-acid sequence, 34 residues long: U2-theraphotoxin-Bs1a (34 aa).

Disulfide bonds link Cys2–Cys16, Cys9–Cys21, and Cys15–Cys28.

In terms of tissue distribution, expressed by the venom gland.

It is found in the secreted. In Brachypelma smithi (Mexican red knee tarantula), this protein is U2-theraphotoxin-Bs1a.